A 204-amino-acid polypeptide reads, in one-letter code: Lymphotoxin-alpha (204 aa).

A signal peptide spans 1–33 (MTPPGRLYLLRVRSAPVLLLLGLLLGLPPGAQG). The region spanning 62–204 (PAAHLIGDPS…SSVFFGAFAL (143 aa)) is the THD domain. An N-linked (GlcNAc...) asparagine glycan is attached at Asn-95. Cys-119 and Cys-155 are joined by a disulfide.

It belongs to the tumor necrosis factor family. As to quaternary structure, homotrimer, and heterotrimer of either two LTB and one LTA subunits or (less prevalent) two LTA and one LTB subunits. Interacts with TNFRSF14.

The protein localises to the secreted. Its subcellular location is the membrane. In terms of biological role, cytokine that in its homotrimeric form binds to TNFRSF1A/TNFR1, TNFRSF1B/TNFBR and TNFRSF14/HVEM. In its heterotrimeric form with LTB binds to TNFRSF3/LTBR. Lymphotoxin is produced by lymphocytes and is cytotoxic for a wide range of tumor cells in vitro and in vivo. The protein is Lymphotoxin-alpha (LTA) of Canis lupus familiaris (Dog).